Consider the following 91-residue polypeptide: Small ribosomal subunit protein uS19 (91 aa).

The protein belongs to the universal ribosomal protein uS19 family.

In terms of biological role, protein S19 forms a complex with S13 that binds strongly to the 16S ribosomal RNA. This is Small ribosomal subunit protein uS19 from Aliarcobacter butzleri (strain RM4018) (Arcobacter butzleri).